The primary structure comprises 385 residues: Protein delta homolog 1 (385 aa).

The N-terminal stretch at 1 to 23 (MIATGALLRVLLLLLAFGHSTYG) is a signal peptide. EGF-like domains follow at residues 24–55 (AECDPPCDPQYGFCEADNVCRCHVGWEGPLCD), 53–86 (LCDKCVTAPGCVNGVCKEPWQCICKDGWDGKFCE), 88–125 (DVRACTSTPCANNGTCVDLEKGQYECSCTPGFSGKDCQ), 127–168 (KAGP…NFCE), 172–208 (ATNSCTPNPCENDGVCTDIGGDFRCRCPAGFVDKTCS), and 210–247 (PVSNCASGPCQNGGTCLQHTQVSFECLCKPPFMGPTCA). The Extracellular segment spans residues 24 to 305 (AECDPPCDPQ…KSTPLLTEGQ (282 aa)). 12 disulfides stabilise this stretch: cysteine 26-cysteine 37, cysteine 30-cysteine 43, cysteine 45-cysteine 54, cysteine 57-cysteine 68, cysteine 63-cysteine 74, cysteine 76-cysteine 85, cysteine 92-cysteine 103, cysteine 97-cysteine 113, cysteine 115-cysteine 124, cysteine 131-cysteine 144, cysteine 138-cysteine 156, and cysteine 158-cysteine 167. A glycan (O-linked (GalNAc...) serine) is linked at serine 94. A glycan (N-linked (GlcNAc...) asparagine) is linked at asparagine 100. A glycan (N-linked (GlcNAc...) asparagine; atypical; partial) is linked at asparagine 165. Asparagine 174 carries an N-linked (GlcNAc...) asparagine; atypical glycan. Disulfide bonds link cysteine 176/cysteine 187, cysteine 181/cysteine 196, cysteine 198/cysteine 207, cysteine 214/cysteine 225, cysteine 219/cysteine 235, and cysteine 237/cysteine 246. A glycan (O-linked (GalNAc...) serine) is linked at serine 216. O-linked (GalNAc...) threonine glycosylation occurs at threonine 224. A glycan (O-linked (GalNAc...) threonine) is linked at threonine 258. Threonine 267 carries O-linked (GalNAc...) threonine; partial glycosylation. Threonine 271 carries O-linked (GalNAc...) threonine glycosylation. Asparagine 295 carries an N-linked (GlcNAc...) asparagine glycan. A helical membrane pass occupies residues 306-329 (AICFTILGVLTSLVVLGTVAIVFL). Topologically, residues 330–385 (NKCETWVSNLRYNHTFRKKKNLLLQYNSGEELAVNIIFPEKIDMTTFNKEAGDEEI) are cytoplasmic.

As to quaternary structure, monomer. Interacts with SH3RF2. Post-translationally, N- and O-glycosylated. In terms of tissue distribution, highly expressed in fetal liver, placenta, adult adrenal gland, brain, testis and ovary and, to a lesser degree, in adult kidney, muscle, thymus and heart.

Its subcellular location is the membrane. It localises to the cytoplasm. In terms of biological role, may have a role in neuroendocrine differentiation. Inhibits adipocyte differentiation. In Mus musculus (Mouse), this protein is Protein delta homolog 1 (Dlk1).